The sequence spans 466 residues: UDP-glycosyltransferase 91B1 (466 aa).

UDP-alpha-D-glucose contacts are provided by residues Thr-286, 342–344 (VPQ), 359–367 (HCGWGSAVE), and 381–384 (NLDQ).

Belongs to the UDP-glycosyltransferase family.

The chain is UDP-glycosyltransferase 91B1 (UGT91B1) from Arabidopsis thaliana (Mouse-ear cress).